The following is a 417-amino-acid chain: UDP-N-acetylglucosamine 1-carboxyvinyltransferase (417 aa).

22–23 (KN) provides a ligand contact to phosphoenolpyruvate. R92 lines the UDP-N-acetyl-alpha-D-glucosamine pocket. The Proton donor role is filled by C116. Position 116 is a 2-(S-cysteinyl)pyruvic acid O-phosphothioketal (C116). UDP-N-acetyl-alpha-D-glucosamine-binding positions include 121 to 125 (RPIDL), D306, and I328.

The protein belongs to the EPSP synthase family. MurA subfamily.

It is found in the cytoplasm. It catalyses the reaction phosphoenolpyruvate + UDP-N-acetyl-alpha-D-glucosamine = UDP-N-acetyl-3-O-(1-carboxyvinyl)-alpha-D-glucosamine + phosphate. The protein operates within cell wall biogenesis; peptidoglycan biosynthesis. Its function is as follows. Cell wall formation. Adds enolpyruvyl to UDP-N-acetylglucosamine. This chain is UDP-N-acetylglucosamine 1-carboxyvinyltransferase, found in Buchnera aphidicola subsp. Schizaphis graminum (strain Sg).